Here is a 110-residue protein sequence, read N- to C-terminus: Nucleoid-associated protein Mkms_4993 (110 aa).

It belongs to the YbaB/EbfC family. In terms of assembly, homodimer.

It localises to the cytoplasm. Its subcellular location is the nucleoid. Its function is as follows. Binds to DNA and alters its conformation. May be involved in regulation of gene expression, nucleoid organization and DNA protection. The sequence is that of Nucleoid-associated protein Mkms_4993 from Mycobacterium sp. (strain KMS).